Reading from the N-terminus, the 691-residue chain is F-box/LRR-repeat protein 5 (691 aa).

Residues 1-159 (MAPFPEEVDV…IKKKVIAQHC (159 aa)) form a hemerythrin-like region. Positions 15, 57, 58, 61, 80, 126, and 130 each coordinate Fe(3+). The F-box domain occupies 202 to 248 (STGITHLPPEVMVSIFSYLNPQELCRCSQVSTKWSQLAKTGSLWKHL). LRR repeat units lie at residues 340-364 (SSAVSSKMVRQILELCPNLEHLDLT), 365-392 (QTDISDSAFDSWSWLGCCQSLRHLDLSG), 393-418 (CEKITDVALEKISRALGILTTHESGL), 479-508 (VWMLDAEDLADIEDAVEWRHRNVESLCVME), 576-607 (TRLLREKDLIYSGSEKSDQETGRVLLFLSLSG), 608-635 (CYQITDHGLRVLTLGGGLPYLEHLNLSG), and 636-661 (CLTVTGAGLQDLVSACPSLNDEYFYY). Cys662, Cys676, Cys686, and Cys687 together coordinate [2Fe-2S] cluster.

Part of a SCF (SKP1-cullin-F-box) protein ligase complex. Interacts with ACO1/IRP1, IREB2/IRP2; the interaction depends on the [2Fe-2S] cluster. Interacts with DCTN1/p150-glued. Requires [2Fe-2S] cluster as cofactor. In terms of processing, polybiquitinated upon iron and oxygen depletion, leading to its degradation by the proteasome. Ubiquitination is regulated by the hemerythrin-like region that acts as an oxygen and iron sensor. Undergoes constitutive ubiquitin-dependent degradation at the steady state by HERC2.

The protein resides in the cytoplasm. The protein localises to the perinuclear region. Its subcellular location is the nucleus. It functions in the pathway protein modification; protein ubiquitination. With respect to regulation, an iron-sulfur cluster promotes IRP2 polyubiquitination and degradation in response to both iron and oxygen concentrations. In terms of biological role, component of some SCF (SKP1-cullin-F-box) protein ligase complex that plays a central role in iron homeostasis by promoting the ubiquitination and subsequent degradation of IREB2/IRP2. The C-terminal domain of FBXL5 contains a redox-sensitive [2Fe-2S] cluster that, upon oxidation, promotes binding to IRP2 to effect its oxygen-dependent degradation. Under iron deficiency conditions, the N-terminal hemerythrin-like (Hr) region, which contains a diiron metal center, cannot bind iron and undergoes conformational changes that destabilize the FBXL5 protein and cause its ubiquitination and degradation. When intracellular iron levels start rising, the Hr region is stabilized. Additional increases in iron levels facilitate the assembly and incorporation of a redox active [2Fe-2S] cluster in the C-terminal domain. Only when oxygen level is high enough to maintain the cluster in its oxidized state can FBXL5 recruit IRP2 as a substrate for polyubiquination and degradation. Promotes ubiquitination and subsequent degradation of the dynactin complex component DCTN1. Within the nucleus, promotes the ubiquitination of SNAI1; preventing its interaction with DNA and promoting its degradation. Negatively regulates DNA damage response by mediating the ubiquitin-proteasome degradation of the DNA repair protein NABP2. This Bos taurus (Bovine) protein is F-box/LRR-repeat protein 5 (FBXL5).